The chain runs to 185 residues: MIEETLLEAEEKMDKAVEVAKEDFSAVRTGRANPGLFAKVMVDYYGAPTPLQQLASFAVPEARTLLITPFDRSALGDIEKALSNSEVGANPSNDGNVIRVVMPELTQERRREYVKIVRGKSEDAKISIRNIRRKAKESLDKIVKDGDAGEDEGSRAEKELDGLTKTHTENIDELLKRKEAELLEV.

The tract at residues 142-165 (IVKDGDAGEDEGSRAEKELDGLTK) is disordered.

This sequence belongs to the RRF family.

The protein localises to the cytoplasm. Functionally, responsible for the release of ribosomes from messenger RNA at the termination of protein biosynthesis. May increase the efficiency of translation by recycling ribosomes from one round of translation to another. The sequence is that of Ribosome-recycling factor from Renibacterium salmoninarum (strain ATCC 33209 / DSM 20767 / JCM 11484 / NBRC 15589 / NCIMB 2235).